The sequence spans 912 residues: Tiger protein E1 (912 aa).

A signal peptide spans 1-22; the sequence is MKLKHLTIFLFIFIYRFLFVKS. At 23 to 815 the chain is on the extracellular side; sequence DCYLINNERP…YSENKSSGFP (793 aa). Residues asparagine 54, asparagine 108, asparagine 164, asparagine 183, asparagine 232, asparagine 268, asparagine 323, asparagine 356, asparagine 398, asparagine 407, asparagine 568, asparagine 637, asparagine 653, asparagine 658, asparagine 706, asparagine 716, asparagine 763, asparagine 774, asparagine 781, and asparagine 809 are each glycosylated (N-linked (GlcNAc...) asparagine). IPT/TIG domains are found at residues 532–609 and 612–686; these read SSDQ…GPFT and PVIE…PLII. The IPT/TIG 3 domain occupies 715 to 796; that stretch reads TNTSDIDQTA…DGQYFIAQIF (82 aa). A helical transmembrane segment spans residues 816-836; that stretch reads NEMYIGIVAIIIFLALIFFAI. Residues 837 to 912 lie on the Cytoplasmic side of the membrane; the sequence is KTQVEKYIEE…IRCCFKEHTD (76 aa).

It localises to the cell membrane. This chain is Tiger protein E1 (tgrE1), found in Dictyostelium discoideum (Social amoeba).